The primary structure comprises 363 residues: Pyrimidine monooxygenase RutA (363 aa).

FMN-binding positions include 49–50 (IK), Asn-115, Glu-124, 140–141 (RY), and Ser-190.

It belongs to the NtaA/SnaA/DszA monooxygenase family. RutA subfamily.

The enzyme catalyses uracil + FMNH2 + NADH + O2 = (Z)-3-ureidoacrylate + FMN + NAD(+) + H2O + H(+). It carries out the reaction thymine + FMNH2 + NADH + O2 = (Z)-2-methylureidoacrylate + FMN + NAD(+) + H2O + H(+). Its function is as follows. Catalyzes the pyrimidine ring opening between N-3 and C-4 by an unusual flavin hydroperoxide-catalyzed mechanism, adding oxygen atoms in the process to yield ureidoacrylate peracid, that immediately reacts with FMN forming ureidoacrylate and FMN-N(5)-oxide. The FMN-N(5)-oxide reacts spontaneously with NADH to produce FMN. Requires the flavin reductase RutF to regenerate FMN in vivo. This Escherichia coli O6:K15:H31 (strain 536 / UPEC) protein is Pyrimidine monooxygenase RutA.